The chain runs to 516 residues: L-amino-acid oxidase (516 aa).

The signal sequence occupies residues Met-1–Cys-18. The cysteines at positions 28 and 191 are disulfide-linked. FAD contacts are provided by residues Met-61–Ser-62, Glu-81–Ala-82, Arg-89, and Gly-105–Arg-108. Arg-108 contacts substrate. A glycan (N-linked (GlcNAc...) asparagine) is linked at Asn-190. Substrate is bound at residue His-241. Val-279 is a binding site for FAD. Cysteines 349 and 430 form a disulfide. Residue Asn-379 is glycosylated (N-linked (GlcNAc...) asparagine). Residue Tyr-390 coordinates substrate. Residues Glu-475, His-481–Ser-486, and Gly-482–Ser-487 each bind FAD. Substrate-binding positions include His-481–Gly-482 and Gly-482–Trp-483.

The protein belongs to the flavin monoamine oxidase family. FIG1 subfamily. Homodimer; non-covalently linked. The cofactor is FAD. In terms of processing, N-glycosylated. As to expression, expressed by the venom gland.

Its subcellular location is the secreted. It carries out the reaction an L-alpha-amino acid + O2 + H2O = a 2-oxocarboxylate + H2O2 + NH4(+). Its function is as follows. Catalyzes an oxidative deamination of predominantly hydrophobic and aromatic L-amino acids, thus producing hydrogen peroxide that may contribute to the diverse toxic effects of this enzyme. Exhibits diverse biological activities, such as hemorrhage, hemolysis, edema, apoptosis of vascular endothelial cells or tumor cell lines, antibacterial and antiparasitic activities, as well as regulation of platelet aggregation. Effects of snake L-amino oxidases on platelets are controversial, since they either induce aggregation or inhibit agonist-induced aggregation. These different effects are probably due to different experimental conditions. Displays dose-dependent inhibition on HIV-1 infection and replication. The protein is L-amino-acid oxidase of Trimeresurus stejnegeri (Chinese green tree viper).